The following is a 103-amino-acid chain: MRLKKNDNVLVIAGKDKGKTGKVRYAFPRTDRVLVEGVNMIKRHSRARGQAKQAGIIEREAPLHVSNLMLLCSKCNKPARIGSRELADGKSVRYCKSCNEVID.

The protein belongs to the universal ribosomal protein uL24 family. Part of the 50S ribosomal subunit.

Functionally, one of two assembly initiator proteins, it binds directly to the 5'-end of the 23S rRNA, where it nucleates assembly of the 50S subunit. One of the proteins that surrounds the polypeptide exit tunnel on the outside of the subunit. The sequence is that of Large ribosomal subunit protein uL24 from Dehalococcoides mccartyi (strain ATCC BAA-2266 / KCTC 15142 / 195) (Dehalococcoides ethenogenes (strain 195)).